The chain runs to 179 residues: Large ribosomal subunit protein uL5 (179 aa).

Belongs to the universal ribosomal protein uL5 family. In terms of assembly, part of the 50S ribosomal subunit; part of the 5S rRNA/L5/L18/L25 subcomplex. Contacts the 5S rRNA and the P site tRNA. Forms a bridge to the 30S subunit in the 70S ribosome.

Functionally, this is one of the proteins that bind and probably mediate the attachment of the 5S RNA into the large ribosomal subunit, where it forms part of the central protuberance. In the 70S ribosome it contacts protein S13 of the 30S subunit (bridge B1b), connecting the 2 subunits; this bridge is implicated in subunit movement. Contacts the P site tRNA; the 5S rRNA and some of its associated proteins might help stabilize positioning of ribosome-bound tRNAs. The polypeptide is Large ribosomal subunit protein uL5 (Salmonella arizonae (strain ATCC BAA-731 / CDC346-86 / RSK2980)).